The chain runs to 266 residues: Transmembrane domain-containing protein TMIGD3 (266 aa).

The disordered stretch occupies residues 1-20 (MEGSPAGPIEQKEARWESSW). Residues 55 to 75 (FLPVMWLFILLSLALISDAMV) form a helical membrane-spanning segment. Asn192 carries N-linked (GlcNAc...) asparagine glycosylation. The chain crosses the membrane as a helical span at residues 213 to 233 (ILIICILITGLGIISVISHLT).

Expressed in the lung and bone. Expressed at lower levels in osteosarcoma tissues (at protein level).

It localises to the membrane. Plays a suppressive role in osteosarcoma malignancy by inhibiting NF-kappa-B activity. This Homo sapiens (Human) protein is Transmembrane domain-containing protein TMIGD3.